The primary structure comprises 203 residues: Small ribosomal subunit protein uS5 (203 aa).

The region spanning 51 to 114 (LEDEVLDITM…ENAKLNVVRI (64 aa)) is the S5 DRBM domain.

This sequence belongs to the universal ribosomal protein uS5 family. As to quaternary structure, part of the 30S ribosomal subunit. Contacts protein S4.

Its function is as follows. With S4 and S12 plays an important role in translational accuracy. In Methanothrix thermoacetophila (strain DSM 6194 / JCM 14653 / NBRC 101360 / PT) (Methanosaeta thermophila), this protein is Small ribosomal subunit protein uS5.